The chain runs to 265 residues: Large ribosomal subunit protein bL9m (265 aa).

The transit peptide at 1-49 (MAASVAPGVRTLWWAGAAWLRQGGIRELFRPRIEGSTPGRDFSLSHYQS) directs the protein to the mitochondrion.

The protein belongs to the bacterial ribosomal protein bL9 family. As to quaternary structure, component of the mitochondrial ribosome large subunit (39S) which comprises a 16S rRNA and about 50 distinct proteins.

The protein localises to the mitochondrion. This chain is Large ribosomal subunit protein bL9m (Mrpl9), found in Mus musculus (Mouse).